The following is a 450-amino-acid chain: Putative cysteine--tRNA ligase 2 (450 aa).

The short motif at 29–39 (ITPYKSTHLGH) is the 'HIGH' region element. The 'KMSKS' region signature appears at 270-274 (KMSKS). K273 contacts ATP. The segment at 372 to 392 (PIHPKHSPQMRDYSEHGSAGQ) is disordered.

The protein belongs to the class-I aminoacyl-tRNA synthetase family. As to quaternary structure, monomer.

The protein resides in the cytoplasm. The enzyme catalyses tRNA(Cys) + L-cysteine + ATP = L-cysteinyl-tRNA(Cys) + AMP + diphosphate. The chain is Putative cysteine--tRNA ligase 2 (cysS2) from Tropheryma whipplei (strain TW08/27) (Whipple's bacillus).